The sequence spans 561 residues: Solute carrier family 41 member 2 (561 aa).

Topologically, residues Met1–Gln150 are extracellular. Residues Ile151–Ile171 form a helical membrane-spanning segment. At Val172–Glu183 the chain is on the cytoplasmic side. The helical transmembrane segment at Val184 to Ser204 threads the bilayer. Topologically, residues Arg205–Gln233 are extracellular. Residues Val234 to Pro254 traverse the membrane as a helical segment. Over Asp255 to Ser270 the chain is Cytoplasmic. Residues Val271–Gly291 form a helical membrane-spanning segment. The Extracellular segment spans residues Ser292–Asn301. The helical transmembrane segment at Val302–Ile322 threads the bilayer. Residues Ser323–Tyr333 are Cytoplasmic-facing. A helical membrane pass occupies residues Ala334–Ile354. At Ala355–Val364 the chain is on the extracellular side. A helical membrane pass occupies residues Leu365–Ile385. The Cytoplasmic segment spans residues Leu386–Asn394. Residues Leu395–Ile415 form a helical membrane-spanning segment. Residues Gln416–Ala457 lie on the Extracellular side of the membrane. The helical transmembrane segment at Gln458–Met478 threads the bilayer. Residues Lys479–Pro487 are Cytoplasmic-facing. A helical transmembrane segment spans residues Ile488 to Ala508. Over Asp509–Thr531 the chain is Extracellular. The helical transmembrane segment at Ala532–Ile552 threads the bilayer. The Cytoplasmic segment spans residues Gly553–Asp561.

The protein belongs to the SLC41A transporter family.

The protein resides in the cell membrane. It carries out the reaction Mg(2+)(in) = Mg(2+)(out). It catalyses the reaction Mn(2+)(in) = Mn(2+)(out). The enzyme catalyses Co(2+)(in) = Co(2+)(out). The catalysed reaction is Ni(2+)(in) = Ni(2+)(out). It carries out the reaction Fe(2+)(in) = Fe(2+)(out). Functionally, acts as a plasma-membrane magnesium transporter. Can also mediate the transport of other divalent metal cations in an order of Ba(2+) &gt; Ni(2+) &gt; Co(2+) &gt; Fe(2+) &gt; Mn(2+). This is Solute carrier family 41 member 2 (slc41a2) from Xenopus laevis (African clawed frog).